The chain runs to 277 residues: Methylglyoxal reductase DkgA (277 aa).

The Proton donor role is filled by tyrosine 51. Histidine 107 lines the substrate pocket. 187 to 241 (SPLAQGGKGVFDQEIIRKLAQQYNKTPAQIVIRWHLDSGLIVIPKSVTPARIREN) contacts NADP(+).

This sequence belongs to the aldo/keto reductase family. Monomer.

The protein localises to the cytoplasm. The enzyme catalyses hydroxyacetone + NADP(+) = methylglyoxal + NADPH + H(+). Aldo-keto reductase that significantly contributes to cellular methylglyoxal detoxification by catalyzing the NADPH-dependent conversion of methylglyoxal to acetol. The sequence is that of Methylglyoxal reductase DkgA from Yersinia pestis.